We begin with the raw amino-acid sequence, 600 residues long: Arginine--tRNA ligase (600 aa).

The short motif at 123–133 (PNVAKPMHVGH) is the 'HIGH' region element.

Belongs to the class-I aminoacyl-tRNA synthetase family. In terms of assembly, monomer.

Its subcellular location is the cytoplasm. The catalysed reaction is tRNA(Arg) + L-arginine + ATP = L-arginyl-tRNA(Arg) + AMP + diphosphate. This is Arginine--tRNA ligase from Caulobacter vibrioides (strain NA1000 / CB15N) (Caulobacter crescentus).